The primary structure comprises 215 residues: MGKVYDWFEERLEIQAIADDITSKYVPPHVNIFYCLGGITLTCFIVQVATGFAMTFYYRPTVTEAFASIQYIMTEVNFGWLIRSVHRWSASMMVLMMILHVFRVYLTGGFKKPRELTWITGVVLAVLTVSFGVTGYSLPWDQIGYWAVKIVTGVPEAIPIVGSSLVELLRGSVSVGQSTLTRFYSLHTFVLPLLTAVFMLMHFLMIRKQGISGPL.

A helical membrane pass occupies residues 32–52; that stretch reads IFYCLGGITLTCFIVQVATGF. A heme c-binding site is contributed by Cys-35. Heme b-binding residues include His-86 and His-100. Helical transmembrane passes span 90–110, 116–136, and 186–206; these read ASMMVLMMILHVFRVYLTGGF, LTWITGVVLAVLTVSFGVTGY, and LHTFVLPLLTAVFMLMHFLMI. Residues His-187 and His-202 each coordinate heme b.

Belongs to the cytochrome b family. PetB subfamily. In terms of assembly, the 4 large subunits of the cytochrome b6-f complex are cytochrome b6, subunit IV (17 kDa polypeptide, PetD), cytochrome f and the Rieske protein, while the 4 small subunits are PetG, PetL, PetM and PetN. The complex functions as a dimer. It depends on heme b as a cofactor. Heme c is required as a cofactor.

The protein resides in the plastid. It localises to the chloroplast thylakoid membrane. Functionally, component of the cytochrome b6-f complex, which mediates electron transfer between photosystem II (PSII) and photosystem I (PSI), cyclic electron flow around PSI, and state transitions. This Chara vulgaris (Common stonewort) protein is Cytochrome b6.